Here is a 423-residue protein sequence, read N- to C-terminus: Inactive autotransporter heptosyltransferase BimC (423 aa).

Positions 1-10 (MPKVTFSGSA) are enriched in polar residues. The disordered stretch occupies residues 1–49 (MPKVTFSGSAPTLGVHAPPALDPRQPASPPPAASNGTHARGFSPPADMP). The Fe(3+) site is built by Cys-371, Cys-374, Cys-390, and Cys-402.

This sequence belongs to the glycosyltransferase 9 family. In terms of assembly, homotrimer or homotetramer. It depends on Fe(3+) as a cofactor.

It is found in the cell inner membrane. Its subcellular location is the cytoplasm. Its function is as follows. Iron-binding protein which is required for the asymmetric polar distribution of the autotransporter BimA on the bacterial surface prior to its translocation into bacterial periplasm. Lacks heptosyltransferase activity. This chain is Inactive autotransporter heptosyltransferase BimC, found in Burkholderia thailandensis (strain ATCC 700388 / DSM 13276 / CCUG 48851 / CIP 106301 / E264).